Here is a 219-residue protein sequence, read N- to C-terminus: Arginine transport system permease protein ArtQ (219 aa).

A run of 5 helical transmembrane segments spans residues 19-39, 51-73, 88-108, 149-169, and 187-207; these read LAIT…LGIV, FIWI…QLMI, QFWA…SEII, AIVN…VIGL, and LEPL…LTFI. The ABC transmembrane type-1 domain maps to 19-208; it reads LAITLKIVVV…VLVLILTFIG (190 aa).

Belongs to the binding-protein-dependent transport system permease family. HisMQ subfamily.

The protein localises to the cell membrane. Part of a binding-protein-dependent transport system for arginine. Probably responsible for the translocation of the substrate across the membrane. The protein is Arginine transport system permease protein ArtQ (artQ) of Bacillus subtilis (strain 168).